The chain runs to 454 residues: Photosystem II CP47 reaction center protein (454 aa).

A run of 6 helical transmembrane segments spans residues 6–26 (MFVL…GWTI), 47–61 (IILS…IWHW), 86–102 (GIHL…FGAF), 149–164 (IAAG…FHLS), 183–198 (VLSS…AFVV), and 403–418 (SFAL…HGAR).

The protein belongs to the PsbB/PsbC family. PsbB subfamily. PSII is composed of 1 copy each of membrane proteins PsbA, PsbB, PsbC, PsbD, PsbE, PsbF, PsbH, PsbI, PsbJ, PsbK, PsbL, PsbM, PsbT, PsbX, PsbY, PsbZ, Psb30/Ycf12, at least 3 peripheral proteins of the oxygen-evolving complex and a large number of cofactors. It forms dimeric complexes. It depends on Binds multiple chlorophylls. PSII binds additional chlorophylls, carotenoids and specific lipids. as a cofactor.

It localises to the plastid. Its subcellular location is the chloroplast thylakoid membrane. Its function is as follows. One of the components of the core complex of photosystem II (PSII). It binds chlorophyll and helps catalyze the primary light-induced photochemical processes of PSII. PSII is a light-driven water:plastoquinone oxidoreductase, using light energy to abstract electrons from H(2)O, generating O(2) and a proton gradient subsequently used for ATP formation. In Ostreococcus tauri, this protein is Photosystem II CP47 reaction center protein.